Here is a 157-residue protein sequence, read N- to C-terminus: 2-C-methyl-D-erythritol 2,4-cyclodiphosphate synthase (157 aa).

The a divalent metal cation site is built by Asp-8 and His-10. 4-CDP-2-C-methyl-D-erythritol 2-phosphate-binding positions include 8 to 10 and 34 to 35; these read DVH and HS. His-42 serves as a coordination point for a divalent metal cation. Residues 56–58, 61–65, 132–135, Phe-139, and Arg-142 contribute to the 4-CDP-2-C-methyl-D-erythritol 2-phosphate site; these read DIG, FPDTD, and TTTE.

It belongs to the IspF family. In terms of assembly, homotrimer. It depends on a divalent metal cation as a cofactor.

It carries out the reaction 4-CDP-2-C-methyl-D-erythritol 2-phosphate = 2-C-methyl-D-erythritol 2,4-cyclic diphosphate + CMP. It functions in the pathway isoprenoid biosynthesis; isopentenyl diphosphate biosynthesis via DXP pathway; isopentenyl diphosphate from 1-deoxy-D-xylulose 5-phosphate: step 4/6. Involved in the biosynthesis of isopentenyl diphosphate (IPP) and dimethylallyl diphosphate (DMAPP), two major building blocks of isoprenoid compounds. Catalyzes the conversion of 4-diphosphocytidyl-2-C-methyl-D-erythritol 2-phosphate (CDP-ME2P) to 2-C-methyl-D-erythritol 2,4-cyclodiphosphate (ME-CPP) with a corresponding release of cytidine 5-monophosphate (CMP). The sequence is that of 2-C-methyl-D-erythritol 2,4-cyclodiphosphate synthase from Geotalea uraniireducens (strain Rf4) (Geobacter uraniireducens).